A 90-amino-acid chain; its full sequence is WAP four-disulfide core domain protein 12 (90 aa).

Residues 1–23 (MGSSSFLVLMVSLALVTLVAVEG) form the signal peptide. One can recognise a WAP domain in the interval 27–74 (GIEKAGVCPADNVRCFKSDPPQCHTDQDCLGERKCCYLHCGFKCVIPV). Cystine bridges form between Cys-34-Cys-62, Cys-41-Cys-66, Cys-49-Cys-61, and Cys-55-Cys-70.

It is found in the secreted. Its function is as follows. Antibacterial protein. Putative acid-stable proteinase inhibitor. This chain is WAP four-disulfide core domain protein 12 (WFDC12), found in Gorilla gorilla gorilla (Western lowland gorilla).